The sequence spans 380 residues: Succinyl-diaminopimelate desuccinylase (380 aa).

His69 contacts Zn(2+). The active site involves Asp71. Asp102 lines the Zn(2+) pocket. Glu135 serves as the catalytic Proton acceptor. Residues Glu136, Glu164, and His353 each coordinate Zn(2+).

This sequence belongs to the peptidase M20A family. DapE subfamily. Homodimer. The cofactor is Zn(2+). Co(2+) is required as a cofactor.

The catalysed reaction is N-succinyl-(2S,6S)-2,6-diaminopimelate + H2O = (2S,6S)-2,6-diaminopimelate + succinate. It participates in amino-acid biosynthesis; L-lysine biosynthesis via DAP pathway; LL-2,6-diaminopimelate from (S)-tetrahydrodipicolinate (succinylase route): step 3/3. Catalyzes the hydrolysis of N-succinyl-L,L-diaminopimelic acid (SDAP), forming succinate and LL-2,6-diaminopimelate (DAP), an intermediate involved in the bacterial biosynthesis of lysine and meso-diaminopimelic acid, an essential component of bacterial cell walls. The polypeptide is Succinyl-diaminopimelate desuccinylase (Ruegeria pomeroyi (strain ATCC 700808 / DSM 15171 / DSS-3) (Silicibacter pomeroyi)).